The following is a 3015-amino-acid chain: Genome polyprotein (3015 aa).

Serine 2 bears the N-acetylserine; by host mark. The segment at 2 to 23 (STLPKPQRKTKRNTNRRPMDVK) is interaction with STAT1. The interaction with EIF2AK2/PKR stretch occupies residues 2–58 (STLPKPQRKTKRNTNRRPMDVKFPGGGQIVGGVYLLPRRGPRLGVRATRKTSERSQP). Residues 2–59 (STLPKPQRKTKRNTNRRPMDVKFPGGGQIVGGVYLLPRRGPRLGVRATRKTSERSQPR) form an interaction with DDX3X region. Residues 2-75 (STLPKPQRKT…PKARQPIGRS (74 aa)) form a disordered region. Residues 2–168 (STLPKPQRKT…EDGVNYATGN (167 aa)) lie on the Cytoplasmic side of the membrane. 2 consecutive short sequence motifs (nuclear localization signal) follow at residues 5–13 (PKPQRKTKR) and 38–43 (PRRGPR). Over residues 7–16 (PQRKTKRNTN) the composition is skewed to basic residues. The segment covering 32-47 (GGVYLLPRRGPRLGVR) has biased composition (low complexity). Serine 53 carries the post-translational modification Phosphoserine; by host. 2 consecutive short sequence motifs (nuclear localization signal) follow at residues 58 to 64 (PRGRRQP) and 66 to 71 (PKARQP). Residues serine 99 and serine 116 each carry the phosphoserine; by host modification. The segment at 112-152 (PRRRSRNLGKVIDTLTCGLADLMGYIPVLGGPLGGVAAALA) is important for endoplasmic reticulum and mitochondrial localization. Residues 122-173 (VIDTLTCGLADLMGYIPVLGGPLGGVAAALAHGVRAIEDGVNYATGNLPGCS) are interaction with APOA2. Residues 164–167 (YATG) are important for lipid droplets localization. Residues 169 to 189 (LPGCSFSIFLLALLSCLTTPA) traverse the membrane as a helical segment. Residues 178 to 191 (LLALLSCLTTPASA) constitute a propeptide, ER anchor for the core protein, removed in mature form by host signal peptidase. Residues 190 to 358 (SAIQVRNASG…TGAHWGVLGA (169 aa)) lie on the Lumenal side of the membrane. N-linked (GlcNAc...) asparagine; by host glycans are attached at residues asparagine 196, asparagine 209, asparagine 234, and asparagine 250. The interval 265 to 296 (LVGAAAFCSAMYIGDLCGSVFLVGQLFTFRPK) is important for fusion. Asparagine 305 carries N-linked (GlcNAc...) asparagine; by host glycosylation. A helical transmembrane segment spans residues 359–379 (LLYFSMVANWAKVIAVLFLFA). Over 380–726 (GADATTYTGS…WEYVVLAFLV (347 aa)) the chain is Lumenal. The segment at 385-411 (TYTGSAVSSTTGAFVSLFSPGPTQNLQ) is HVR1. Residues asparagine 416, asparagine 422, and asparagine 429 are each glycosylated (N-linked (GlcNAc...) (high mannose) asparagine; by host). Intrachain disulfides connect cysteine 428–cysteine 552, cysteine 451–cysteine 458, cysteine 486–cysteine 494, and cysteine 503–cysteine 508. The N-linked (GlcNAc...) asparagine; by host glycan is linked to asparagine 447. The segment at 474-478 (VNISG) is HVR2. Asparagine 475 carries N-linked (GlcNAc...) asparagine; by host glycosylation. Positions 480 to 493 (SEDKPYCWHYAPRP) are CD81-binding 1. N-linked (GlcNAc...) asparagine; by host glycosylation occurs at asparagine 532. The segment at 544–551 (PPLGAWFG) is CD81-binding 2. A glycan (N-linked (GlcNAc...) asparagine; by host) is linked at asparagine 556. Disulfide bonds link cysteine 564–cysteine 569, cysteine 582–cysteine 586, cysteine 598–cysteine 621, and cysteine 608–cysteine 645. N-linked (GlcNAc...) (high mannose) asparagine; by host glycosylation is found at asparagine 624 and asparagine 646. Residues cysteine 653 and cysteine 678 are joined by a disulfide bond. Positions 661–672 (FEMSPLLFSTTQ) are PKR/eIF2-alpha phosphorylation homology domain (PePHD). The chain crosses the membrane as a helical span at residues 727–747 (LADARVCACLWLMFLVGQAEA). Residues 748–758 (ALENVIVLNAA) are Lumenal-facing. A helical transmembrane segment spans residues 759–779 (SAASCQGLLWGLIFICCAWHV). Residues 780-783 (RGRA) are Cytoplasmic-facing. Residues 784–804 (VPVTTYALLQLWPLLLLILAL) form a helical membrane-spanning segment. The Lumenal segment spans residues 805–814 (PRRAYAFDSE). Residues 815 to 835 (QAASAGLLVLGLITIFTLTPA) form a helical membrane-spanning segment. Residues 836–882 (YKQLLISMLWWIQYFIALTEAQLHQWVPSLLVRGGRDAVILLACLFH) are Cytoplasmic-facing. A helical transmembrane segment spans residues 883–903 (PQLGFEVTKILLALLGPLYLL). The Lumenal segment spans residues 904–929 (QYSLLKTPYFVRAHILLRACMFFRGM). In terms of domain architecture, Peptidase C18 spans 904–1027 (QYSLLKTPYF…DVKGKGWRLL (124 aa)). Residues 905-1207 (YSLLKTPYFV…PVESMQSSQR (303 aa)) are protease NS2-3. Cysteine 923 carries the S-palmitoyl cysteine; by host lipid modification. A helical membrane pass occupies residues 930-950 (ARGRYAQAILLRIGAWTGTYI). The segment at 930-950 (ARGRYAQAILLRIGAWTGTYI) is interaction with host SCPS1. The Cytoplasmic segment spans residues 951-1658 (YDHLAPLSDW…CMSADLEVIT (708 aa)). Residues histidine 953, glutamate 973, and cysteine 994 each act as for protease NS2 activity; shared with dimeric partner in the active site. The Peptidase S29 domain maps to 1028–1209 (APITAYAQQT…ESMQSSQRSP (182 aa)). Aspartate 1108 functions as the Charge relay system; for serine protease NS3 activity in the catalytic mechanism. Zn(2+) contacts are provided by cysteine 1124 and cysteine 1126. Serine 1166 acts as the Charge relay system; for serine protease NS3 activity in catalysis. The Zn(2+) site is built by cysteine 1172 and histidine 1176. Positions 1218–1370 (PAVPQTYQVG…PNITESALPT (153 aa)) constitute a Helicase ATP-binding domain. 1231 to 1238 (APTGSGKS) contributes to the ATP binding site. 2 residues coordinate Mg(2+): serine 1238 and glutamate 1318. Positions 1317 to 1320 (DECH) match the DECH box motif. The RNA-binding stretch occupies residues 1487-1499 (QRRGRTGRGKHGV). The helical transmembrane segment at 1659–1679 (STWVLVGGVVAALAAYCLSVG) threads the bilayer. The NS3-binding stretch occupies residues 1680–1691 (CVVICGRISTSG). Over 1680 to 1806 (CVVICGRIST…SLTSPLSTHQ (127 aa)) the chain is Cytoplasmic. A helical transmembrane segment spans residues 1807–1827 (TLLLNILGGWVASQLANPTAS). At 1828-1829 (TA) the chain is on the lumenal side. The helical transmembrane segment at 1830–1850 (FVVSGLAGAAVGSIGLGRVIV) threads the bilayer. Residue aspartate 1851 is a topological domain, cytoplasmic. The helical transmembrane segment at 1852 to 1872 (VLAGYGAGVSGALVAFKIMCG) threads the bilayer. Residues 1873–1882 (ETPSAEDMVN) are Lumenal-facing. Residues 1883-1903 (LLPALLSPGALVVGVVCAAIL) form a helical membrane-spanning segment. Residues 1904-1973 (RRHAGPSEGA…WINTDWSTPC (70 aa)) are Cytoplasmic-facing. Residue cysteine 1973 is the site of S-palmitoyl cysteine; by host attachment. An intramembrane segment occupies 1974-2003 (SSSWLRDIWDWVCEVLSDFKTWLKAKLVPA). Residues 2004-2994 (LPGVPFLSCQ…YHSASRARPR (991 aa)) lie on the Cytoplasmic side of the membrane. The Zn(2+) site is built by cysteine 2012, cysteine 2030, cysteine 2032, and cysteine 2053. Residues 2121-2209 (EFFTEVDGVR…ASSSASQLSA (89 aa)) form an FKBP8-binding region. Residues 2121-2334 (EFFTEVDGVR…PIPPPRRKKV (214 aa)) form a transcriptional activation region. The interval 2136-2140 (PRCKP) is interaction with non-structural protein 4A. Positions 2190–2442 (RLARGSPPSL…ALVTPCAAEE (253 aa)) are interaction with host SKP2. 6 positions are modified to phosphoserine; by host: serine 2195, serine 2198, serine 2202, serine 2205, serine 2208, and serine 2211. The tract at residues 2211-2250 (SLKATCTMHGAHPDAELIEANLLWRQEMGGNITRVESENK) is ISDR. The interval 2211 to 2276 (SLKATCTMHG…REMSVPAECH (66 aa)) is interaction with EIF2AK2/PKR. The segment at 2250–2308 (KVVILDSFDPLVPEFEEREMSVPAECHRPRRPKFPPALPIWATPGYNPPVLETWKSPTY) is NS4B-binding. Residues 2301–2378 (ETWKSPTYEP…PDHSTESSEH (78 aa)) form a V3 region. Disordered stretches follow at residues 2319-2338 (PPSG…VQLD) and 2352-2413 (KTFE…SWST). The SH3-binding signature appears at 2324–2327 (PPIP). The short motif at 2329 to 2337 (PRRKKVVQL) is the Nuclear localization signal element. Residue lysine 2352 forms a Glycyl lysine isopeptide (Lys-Gly) (interchain with G-Cter in ubiquitin) linkage. Residues 2355–2365 (ETPSSPTTGYG) are compositionally biased toward polar residues. Residues 2368 to 2383 (QPDHSTESSEHDRDDG) show a composition bias toward basic and acidic residues. 2 positions are modified to phosphoserine; by host: serine 2453 and serine 2466. The RdRp catalytic domain occupies 2638-2756 (PMGFSYDTRC…VTESAGVNED (119 aa)). 3 residues coordinate Mg(2+): aspartate 2644, aspartate 2742, and aspartate 2743. Residues 2995-3015 (FLLLCLLLLSVGVGIFLLPAR) form a helical membrane-spanning segment.

Belongs to the hepacivirus polyprotein family. In terms of assembly, homooligomer. Interacts with E1 (via C-terminus). Interacts with the non-structural protein 5A. Interacts (via N-terminus) with host STAT1 (via SH2 domain); this interaction results in decreased STAT1 phosphorylation and ubiquitin-mediated proteasome-dependent STAT1 degradation, leading to decreased IFN-stimulated gene transcription. Interacts with host STAT3; this interaction constitutively activates STAT3. Interacts with host LTBR receptor. Interacts with host TNFRSF1A receptor and possibly induces apoptosis. Interacts with host HNRPK. Interacts with host YWHAE. Interacts with host UBE3A/E6AP. Interacts with host DDX3X. Interacts with host APOA2. Interacts with host RXRA protein. Interacts with host SP110 isoform 3/Sp110b; this interaction sequesters the transcriptional corepressor SP110 away from the nucleus. Interacts with host CREB3 nuclear transcription protein; this interaction triggers cell transformation. Interacts with host ACY3. Interacts with host C1QR1. Interacts with host RBM24; this interaction, which enhances the interaction of the mature core protein with 5'-UTR, may inhibit viral translation and favor replication. Interacts with host EIF2AK2/PKR; this interaction induces the autophosphorylation of EIF2AK2. Part of the viral assembly initiation complex composed of NS2, E1, E2, NS3, NS4A, NS5A and the mature core protein. Forms a heterodimer with envelope glycoprotein E2. Interacts with mature core protein. Interacts with protease NS2. The heterodimer E1/E2 interacts with host CLDN1; this interaction plays a role in viral entry into host cell. Interacts with host SPSB2 (via C-terminus). Part of the viral assembly initiation complex composed of NS2, E1, E2, NS3, NS4A, NS5A and the mature core protein. Interacts with host NEURL3; this interaction prevents E1 binding to glycoprotein E2. As to quaternary structure, forms a heterodimer with envelope glycoprotein E1. Interacts with host CD81 and SCARB1 receptors; these interactions play a role in viral entry into host cell. Interacts with host EIF2AK2/PKR; this interaction inhibits EIF2AK2 and probably allows the virus to evade the innate immune response. Interacts with host CD209/DC-SIGN and CLEC4M/DC-SIGNR. Interact with host SPCS1; this interaction is essential for viral particle assembly. Interacts with protease NS2. The heterodimer E1/E2 interacts with host CLDN1; this interaction plays a role in viral entry into host cell. Part of the viral assembly initiation complex composed of NS2, E1, E2, NS3, NS4A, NS5A and the mature core protein. Interacts with host SLC3A2/4F2hc; the interaction may facilitate viral entry into host cell. Interacts with human PLSCR1. In terms of assembly, homohexamer. Homoheptamer. Interacts with protease NS2. Homodimer. Interacts with host SPCS1; this interaction is essential for viral particle assembly. Interacts with envelope glycoprotein E1. Interacts with envelope glycoprotein E2. Interacts with viroporin p7. Interacts with serine protease/helicase NS3. Part of the replication complex composed of NS2, NS3, NS4A, NS4B, NS5A and the RNA-directed RNA polymerase embedded in an ER-derived membranous web. Part of the viral assembly initiation complex composed of NS2, E1, E2, NS3, NS4A, NS5A and the mature core protein. As to quaternary structure, interacts with protease NS2. Interacts with non-structural protein 4A; this interaction stabilizes the folding of NS3 serine protease. NS3-NS4A interaction is essential for NS3 activation and allows membrane anchorage of the latter. NS3/NS4A complex also prevents phosphorylation of host IRF3, thus preventing the establishment of dsRNA induced antiviral state. Interacts with host MAVS; this interaction leads to the cleavage and inhibition of host MAVS. Interacts with host TICAM1; this interaction leads to the cleavage and inhibition of host TICAM1. Interacts with host TANK-binding kinase/TBK1; this interaction results in the inhibition of the association between TBK1 and IRF3, which leads to the inhibition of IRF3 activation. Interacts with host RBM24. Part of the replication complex composed of NS2, NS3, NS4A, NS4B, NS5A and the RNA-directed RNA polymerase embedded in an ER-derived membranous web. Part of the viral assembly initiation complex composed of NS2, E1, E2, NS3, NS4A, NS5A and the mature core protein. In terms of assembly, interacts with NS3 serine protease; this interaction stabilizes the folding of NS3 serine protease. NS3-NS4A interaction is essential for NS3 activation and allows membrane anchorage of the latter. Interacts with non-structural protein 5A (via N-terminus). Part of the replication complex composed of NS2, NS3, NS4A, NS4B, NS5A and the RNA-directed RNA polymerase embedded in an ER-derived membranous web. Part of the viral assembly initiation complex composed of NS2, E1, E2, NS3, NS4A, NS5A and the mature core protein. Homomultimer. Interacts with non-structural protein NS5A. Interacts with host PLA2G4C; this interaction likely initiates the recruitment of replication complexes to lipid droplets. Interacts with host STING; this interaction disrupts the interaction between STING and TBK1 thereby suppressing the interferon signaling. Part of the replication complex composed of NS2, NS3, NS4A, NS4B, NS5A and the RNA-directed RNA polymerase embedded in an ER-derived membranous web. As to quaternary structure, monomer. Homodimer; dimerization is required for RNA-binding. Interacts with the mature core protein. Interacts (via N-terminus) with non-structural protein 4A. Interacts with non-structural protein 4B. Interacts (via region D2) with RNA-directed RNA polymerase. Part of the viral assembly initiation complex composed of NS2, E1, E2, NS3, NS4A, NS5A and the mature core protein. Part of the replication complex composed of NS2, NS3, NS4A, NS4B, NS5A and the RNA-directed RNA polymerase embedded in an ER-derived membranous web. Interacts with host GRB2. Interacts with host BIN1. Interacts with host PIK3R1. Interacts with host SRCAP. Interacts with host FKBP8. Interacts (via C-terminus) with host VAPB (via MSP domain). Interacts with host EIF2AK2/PKR; this interaction leads to disruption of EIF2AK2 dimerization by NS5A and probably allows the virus to evade the innate immune response. Interacts (via N-terminus) with host PACSIN2 (via N-terminus); this interaction attenuates protein kinase C alpha-mediated phosphorylation of PACSIN2 by disrupting the interaction between PACSIN2 and PRKCA. Interacts (via N-terminus) with host SRC kinase (via SH2 domain). Interacts with most Src-family kinases. Interacts with host IFI27 and SKP2; promotes the ubiquitin-mediated proteasomal degradation of NS5A. Interacts with host GPS2. Interacts with host TNFRSF21; this interaction allows the modulation by the virus of JNK, p38 MAPK, STAT3, and Akt signaling pathways in a DR6-dependent manner. Interacts (via N-terminus) with host CIDEB (via N-terminus); this interaction seems to regulate the association of HCV particles with APOE. Interacts with host CHKA/Choline Kinase-alpha; CHKA bridges host PI4KA and NS5A and potentiates NS5A-stimulated PI4KA activity, which then facilitates the targeting of the ternary complex to the ER for viral replication. Interacts with host SPSB2 (via C-terminus); this interaction targets NS5A for ubiquitination and degradation. Interacts with host RAB18; this interaction may promote the association of NS5A and other replicase components with lipid droplets. Interacts (via region D2) with host PPIA/CYPA; the interaction stimulates RNA-binding ability of NS5A and is dependent on the peptidyl-prolyl cis-trans isomerase activity of PPIA/CYPA. Interacts with host TRIM14; this interaction induces the degradation of NS5A. In terms of assembly, homooligomer. Interacts with non-structural protein 5A. Interacts with host VAPB. Interacts with host PRK2/PKN2. Interacts with host HNRNPA1 and SEPT6; these interactions facilitate viral replication. Part of the replication complex composed of NS2, NS3, NS4A, NS4B, NS5A and the RNA-directed RNA polymerase. Requires Zn(2+) as cofactor. The cofactor is Mg(2+). In terms of processing, specific enzymatic cleavages in vivo yield mature proteins. The structural proteins, core, E1, E2 and p7 are produced by proteolytic processing by host signal peptidases. The core protein precursor is synthesized as a 23 kDa, which is retained in the ER membrane through the hydrophobic signal peptide. Cleavage by the signal peptidase releases the 21 kDa mature core protein. The cleavage of the core protein precursor occurs between aminoacids 176 and 188 but the exact cleavage site is not known. Some degraded forms of the core protein appear as well during the course of infection. The other proteins (p7, NS2, NS3, NS4A, NS4B, NS5A and NS5B) are cleaved by the viral proteases. Autoprocessing between NS2 and NS3 is mediated by the NS2 cysteine protease catalytic domain and regulated by the NS3 N-terminal domain. Phosphorylated by host PKC and PKA. Post-translationally, ubiquitinated; mediated by UBE3A and leading to core protein subsequent proteasomal degradation. In terms of processing, highly N-glycosylated. Palmitoylation is required for NS2/3 autoprocessing and E2 recruitment to membranes. Post-translationally, palmitoylated. This modification may play a role in its polymerization or in protein-protein interactions. In terms of processing, phosphorylated on serines in a basal form termed p56. p58 is a hyperphosphorylated form of p56. p56 and p58 coexist in the cell in roughly equivalent amounts. Hyperphosphorylation is dependent on the presence of NS4A. Host CSNK1A1/CKI-alpha or RPS6KB1 kinases may be responsible for NS5A phosphorylation. Tyrosine phosphorylation is essential for the interaction with host SRC. Post-translationally, ubiquitinated. Ubiquitination, most probably at Lys-2352, mediated by host IFI27 and SKP2 leads to proteasomal degradation, restricting viral infection. Ubiquitination by host TRIM22 leads to interruption of viral replication. In terms of processing, the N-terminus is phosphorylated by host PRK2/PKN2.

The protein resides in the host endoplasmic reticulum membrane. The protein localises to the host mitochondrion membrane. Its subcellular location is the virion. It is found in the host cytoplasm. It localises to the host nucleus. The protein resides in the host lipid droplet. The protein localises to the virion membrane. Its subcellular location is the host mitochondrion. It is found in the host cell membrane. It localises to the host perinuclear region. It carries out the reaction Hydrolysis of four peptide bonds in the viral precursor polyprotein, commonly with Asp or Glu in the P6 position, Cys or Thr in P1 and Ser or Ala in P1'.. It catalyses the reaction a ribonucleoside 5'-triphosphate + H2O = a ribonucleoside 5'-diphosphate + phosphate + H(+). The enzyme catalyses ATP + H2O = ADP + phosphate + H(+). The catalysed reaction is RNA(n) + a ribonucleoside 5'-triphosphate = RNA(n+1) + diphosphate. Its activity is regulated as follows. Inhibited by the antiviral drug hexamethylene amiloride. Inhibition by amantadine appears to be genotype-dependent. Also inhibited by long-alkyl-chain iminosugar derivatives. With respect to regulation, activity is up-regulated by PRK2/PKN2-mediated phosphorylation. Functionally, packages viral RNA to form a viral nucleocapsid, and promotes virion budding. Participates in the viral particle production as a result of its interaction with the non-structural protein 5A. Binds RNA and may function as a RNA chaperone to induce the RNA structural rearrangements taking place during virus replication. Modulates viral translation initiation by interacting with viral IRES and 40S ribosomal subunit. Affects various cell signaling pathways, host immunity and lipid metabolism. Prevents the establishment of cellular antiviral state by blocking the interferon-alpha/beta (IFN-alpha/beta) and IFN-gamma signaling pathways and by blocking the formation of phosphorylated STAT1 and promoting ubiquitin-mediated proteasome-dependent degradation of STAT1. Activates STAT3 leading to cellular transformation. Regulates the activity of cellular genes, including c-myc and c-fos. May repress the promoter of p53, and sequester CREB3 and SP110 isoform 3/Sp110b in the cytoplasm. Represses cell cycle negative regulating factor CDKN1A, thereby interrupting an important check point of normal cell cycle regulation. Targets transcription factors involved in the regulation of inflammatory responses and in the immune response: suppresses TNF-induced NF-kappa-B activation, and activates AP-1. Binds to dendritic cells (DCs) via C1QR1, resulting in down-regulation of T-lymphocytes proliferation. Alters lipid metabolism by interacting with hepatocellular proteins involved in lipid accumulation and storage. Induces up-regulation of FAS promoter activity, and thereby contributes to the increased triglyceride accumulation in hepatocytes (steatosis). In terms of biological role, forms a heterodimer with envelope glycoprotein E2, which mediates virus attachment to the host cell, virion internalization through clathrin-dependent endocytosis and fusion with host membrane. Fusion with the host cell is most likely mediated by both E1 and E2, through conformational rearrangements of the heterodimer required for fusion rather than a classical class II fusion mechanism. E1/E2 heterodimer binds host apolipoproteins such as APOB and ApoE thereby forming a lipo-viro-particle (LVP). APOE associated to the LVP allows the initial virus attachment to cell surface receptors such as the heparan sulfate proteoglycans (HSPGs), syndecan-1 (SDC1), syndecan-1 (SDC2), the low-density lipoprotein receptor (LDLR) and scavenger receptor class B type I (SCARB1). The cholesterol transfer activity of SCARB1 allows E2 exposure and binding of E2 to SCARB1 and the tetraspanin CD81. E1/E2 heterodimer binding on CD81 activates the epithelial growth factor receptor (EGFR) signaling pathway. Diffusion of the complex E1-E2-EGFR-SCARB1-CD81 to the cell lateral membrane allows further interaction with Claudin 1 (CLDN1) and occludin (OCLN) to finally trigger HCV entry. Forms a heterodimer with envelope glycoprotein E1, which mediates virus attachment to the host cell, virion internalization through clathrin-dependent endocytosis and fusion with host membrane. Fusion with the host cell is most likely mediated by both E1 and E2, through conformational rearrangements of the heterodimer required for fusion rather than a classical class II fusion mechanism. The interaction between envelope glycoprotein E2 and host apolipoprotein E/APOE allows the proper assembly, maturation and infectivity of the viral particles. This interaction is probably promoted via the up-regulation of cellular autophagy by the virus. E1/E2 heterodimer binds host apolipoproteins such as APOB and APOE thereby forming a lipo-viro-particle (LVP). APOE associated to the LVP allows the initial virus attachment to cell surface receptors such as the heparan sulfate proteoglycans (HSPGs), syndecan-1 (SDC1), syndecan-1 (SDC2), the low-density lipoprotein receptor (LDLR) and scavenger receptor class B type I (SCARB1). The cholesterol transfer activity of SCARB1 allows E2 exposure and binding of E2 to SCARB1 and the tetraspanin CD81. E1/E2 heterodimer binding on CD81 activates the epithelial growth factor receptor (EGFR) signaling pathway. Diffusion of the complex E1-E2-EGFR-SCARB1-CD81 to the cell lateral membrane allows further interaction with Claudin 1 (CLDN1) and occludin (OCLN) to finally trigger HCV entry. Inhibits host EIF2AK2/PKR activation, preventing the establishment of an antiviral state. Viral ligand for CD209/DC-SIGN and CLEC4M/DC-SIGNR, which are respectively found on dendritic cells (DCs), and on liver sinusoidal endothelial cells and macrophage-like cells of lymph node sinuses. These interactions allow the capture of circulating HCV particles by these cells and subsequent facilitated transmission to permissive cells such as hepatocytes and lymphocyte subpopulations. The interaction between E2 and host amino acid transporter complex formed by SLC3A2 and SLC7A5/LAT1 may facilitate viral entry into host cell. Its function is as follows. Ion channel protein that acts as a viroporin and plays an essential role in the assembly, envelopment and secretion of viral particles. Regulates the host cell secretory pathway, which induces the intracellular retention of viral glycoproteins and favors assembly of viral particles. Creates a pore in acidic organelles and releases Ca(2+) and H(+) in the cytoplasm of infected cells, leading to a productive viral infection. High levels of cytoplasmic Ca(2+) may trigger membrane trafficking and transport of viral ER-associated proteins to viroplasms, sites of viral genome replication. This ionic imbalance induces the assembly of the inflammasome complex, which triggers the maturation of pro-IL-1beta into IL-1beta through the action of caspase-1. Targets also host mitochondria and induces mitochondrial depolarization. In addition of its role as a viroporin, acts as a lipid raft adhesion factor. Functionally, cysteine protease required for the proteolytic auto-cleavage between the non-structural proteins NS2 and NS3. The N-terminus of NS3 is required for the function of NS2 protease (active region NS2-3). Promotes the initiation of viral particle assembly by mediating the interaction between structural and non-structural proteins. In terms of biological role, displays three enzymatic activities: serine protease with a chymotrypsin-like fold, NTPase and RNA helicase. NS3 serine protease, in association with NS4A, is responsible for the cleavages of NS3-NS4A, NS4A-NS4B, NS4B-NS5A and NS5A-NS5B. The NS3/NS4A complex prevents phosphorylation of host IRF3, thus preventing the establishment of dsRNA induced antiviral state. The NS3/NS4A complex induces host amino acid transporter component SLC3A2, thus contributing to HCV propagation. NS3 RNA helicase binds to RNA and unwinds both dsDNA and dsRNA in the 3' to 5' direction, and likely resolves RNA complicated stable secondary structures in the template strand. Binds a single ATP and catalyzes the unzipping of a single base pair of dsRNA. Inhibits host antiviral proteins TBK1 and IRF3 thereby preventing the establishment of an antiviral state. Cleaves host MAVS/CARDIF thereby preventing the establishment of an antiviral state. Cleaves host TICAM1/TRIF, thereby disrupting TLR3 signaling and preventing the establishment of an antiviral state. Peptide cofactor which forms a non-covalent complex with the N-terminal of NS3 serine protease. The NS3/NS4A complex prevents phosphorylation of host IRF3, thus preventing the establishment of dsRNA induced antiviral state. The NS3/NS4A complex induces host amino acid transporter component SLC3A2, thus contributing to HCV propagation. Its function is as follows. Induces a specific membrane alteration that serves as a scaffold for the virus replication complex. This membrane alteration gives rise to the so-called ER-derived membranous web that contains the replication complex. NS4B self-interaction contributes to its function in membranous web formation. Promotes host TRIF protein degradation in a CASP8-dependent manner thereby inhibiting host TLR3-mediated interferon signaling. Disrupts the interaction between STING and TBK1 contributing to the inhibition of interferon signaling. Functionally, phosphorylated protein that is indispensable for viral replication and assembly. Both hypo- and hyperphosphorylated states are required for the viral life cycle. The hyperphosphorylated form of NS5A is an inhibitor of viral replication. Involved in RNA-binding and especially in binding to the viral genome. Zinc is essential for RNA-binding. Participates in the viral particle production as a result of its interaction with the mature viral core protein. Its interaction with host VAPB may target the viral replication complex to vesicles. Down-regulates viral IRES translation initiation. Mediates interferon resistance, presumably by interacting with and inhibiting host EIF2AK2/PKR. Prevents BIN1-induced apoptosis. Acts as a transcriptional activator of some host genes important for viral replication when localized in the nucleus. Via the interaction with host PACSIN2, modulates lipid droplet formation in order to promote virion assembly. Modulates TNFRSF21/DR6 signaling pathway for viral propagation. In terms of biological role, RNA-dependent RNA polymerase that performs primer-template recognition and RNA synthesis during viral replication. Initiates RNA transcription/replication at a flavin adenine dinucleotide (FAD), resulting in a 5'- FAD cap on viral RNAs. In this way, recognition of viral 5' RNA by host pattern recognition receptors can be bypassed, thereby evading activation of antiviral pathways. In Hepatitis C virus genotype 6h (isolate VN004) (HCV), this protein is Genome polyprotein.